The primary structure comprises 216 residues: MGNCAKTPWHRGSKERWQWPGSPLGGSRPSPGPRTEEQEGTQGYSVLGSLVGPACIFLRPSIAATQLDRELRPEEIEELQIAFQEFDRDRDGYIGYRELGACMRTLGYMPTEMELIEISQQISGGKVDFEDFVELMGPKLLAETADMIGVRELRDAFREFDTNGDGCISVGELRAALKALLGERLSQREVDEILQDIDLNGDGLVDFEEFVRMMSR.

A disordered region spans residues 1 to 41 (MGNCAKTPWHRGSKERWQWPGSPLGGSRPSPGPRTEEQEGT). A lipid anchor (N-myristoyl glycine) is attached at glycine 2. A compositionally biased stretch (low complexity) spans 20 to 29 (PGSPLGGSRP). EF-hand domains are found at residues 74-109 (EEIE…LGYM), 125-142 (GKVD…KLLA), 148-183 (IGVR…LLGE), and 185-216 (LSQR…MMSR). 5 residues coordinate Ca(2+): aspartate 87, aspartate 89, aspartate 91, tyrosine 93, and glutamate 98. Ca(2+)-binding residues include aspartate 161, asparagine 163, aspartate 165, cysteine 167, glutamate 172, aspartate 198, asparagine 200, aspartate 202, and glutamate 209.

In terms of tissue distribution, expressed in the inner hair cells (IHCs), outer hair cells,(OHCs) and vestibular hair cells within the ear and in the retina (at protein level). Expressed in the retinal cone type 6 ON-bipolar cells and type 1 OFF-bipolar cells (at protein level). Expressed in the organ of Corti and spiral ganglion neurons in the cochlea (at protein level).

It is found in the cytoplasm. Its subcellular location is the perinuclear region. It localises to the cell membrane. The protein localises to the golgi apparatus. In terms of biological role, required for sound encoding at inner hair cells (IHCs) synapses, likely via inhibition of the inactivation of voltage-gated calcium channel of type 1.3 (Cav1.3) in the IHCs. Required for the normal transfer of light signals through the retina. In Mus musculus (Mouse), this protein is Calcium-binding protein 2 (Cabp2).